Reading from the N-terminus, the 149-residue chain is Dehydrin Rab15 (149 aa).

Residues Met1–His149 are disordered. Basic and acidic residues predominate over residues Lys78–Gln93. Gly residues predominate over residues Thr100–Gly117. The span at Gly132–His149 shows a compositional bias: basic and acidic residues.

It belongs to the plant dehydrin family.

The sequence is that of Dehydrin Rab15 (RAB15) from Triticum aestivum (Wheat).